Reading from the N-terminus, the 467-residue chain is Cysteine--tRNA ligase (467 aa).

Residue C29 participates in Zn(2+) binding. Residues 31–41 (PTVYNYVHIGN) carry the 'HIGH' region motif. The Zn(2+) site is built by C209, H234, and E238. Positions 267–271 (KMSKS) match the 'KMSKS' region motif. An ATP-binding site is contributed by K270.

This sequence belongs to the class-I aminoacyl-tRNA synthetase family. As to quaternary structure, monomer. The cofactor is Zn(2+).

It localises to the cytoplasm. The enzyme catalyses tRNA(Cys) + L-cysteine + ATP = L-cysteinyl-tRNA(Cys) + AMP + diphosphate. In Xylella fastidiosa (strain 9a5c), this protein is Cysteine--tRNA ligase.